The chain runs to 283 residues: Probable replication-associated protein repA1 (283 aa).

It belongs to the IncFII RepA family.

Functionally, this protein is essential for plasmid replication; it is involved in copy control functions. The polypeptide is Probable replication-associated protein repA1 (repA1) (Buchnera aphidicola subsp. Schizaphis graminum (strain Sg)).